A 140-amino-acid chain; its full sequence is Ribosome maturation factor RimP (140 aa).

It belongs to the RimP family.

It is found in the cytoplasm. Required for maturation of 30S ribosomal subunits. The sequence is that of Ribosome maturation factor RimP from Campylobacter lari (strain RM2100 / D67 / ATCC BAA-1060).